Consider the following 927-residue polypeptide: Isoleucine--tRNA ligase (927 aa).

Residues 57–67 carry the 'HIGH' region motif; the sequence is PYANGHIHIGH. Glu561 is a binding site for L-isoleucyl-5'-AMP. The short motif at 602-606 is the 'KMSKS' region element; the sequence is KMSKS. Residue Lys605 coordinates ATP. 4 residues coordinate Zn(2+): Cys897, Cys900, Cys917, and Cys920.

Belongs to the class-I aminoacyl-tRNA synthetase family. IleS type 1 subfamily. In terms of assembly, monomer. The cofactor is Zn(2+).

Its subcellular location is the cytoplasm. It carries out the reaction tRNA(Ile) + L-isoleucine + ATP = L-isoleucyl-tRNA(Ile) + AMP + diphosphate. Its function is as follows. Catalyzes the attachment of isoleucine to tRNA(Ile). As IleRS can inadvertently accommodate and process structurally similar amino acids such as valine, to avoid such errors it has two additional distinct tRNA(Ile)-dependent editing activities. One activity is designated as 'pretransfer' editing and involves the hydrolysis of activated Val-AMP. The other activity is designated 'posttransfer' editing and involves deacylation of mischarged Val-tRNA(Ile). The protein is Isoleucine--tRNA ligase of Syntrophotalea carbinolica (strain DSM 2380 / NBRC 103641 / GraBd1) (Pelobacter carbinolicus).